A 214-amino-acid polypeptide reads, in one-letter code: Putative germin-like protein 9-2 (214 aa).

Positions 1 to 25 are cleaved as a signal peptide; that stretch reads MALSYYSLLLLLLAVWAPALTLVMA. Residues N44 and N60 are each glycosylated (N-linked (GlcNAc...) asparagine). Residues 56–202 enclose the Cupin type-1 domain; that stretch reads RKVFNTSSAP…SFKTDVPTIL (147 aa). Mn(2+) contacts are provided by H104, H106, E111, and H150.

It belongs to the germin family. In terms of assembly, oligomer (believed to be a pentamer but probably hexamer).

The protein resides in the secreted. It is found in the extracellular space. The protein localises to the apoplast. In terms of biological role, may play a role in plant defense. Probably has no oxalate oxidase activity even if the active site is conserved. The sequence is that of Putative germin-like protein 9-2 from Oryza sativa subsp. japonica (Rice).